The primary structure comprises 210 residues: Cell division protein SepF (210 aa).

Composition is skewed to low complexity over residues 36–47 and 59–69; these read QQQQTPAAVPTQ and RASATTATTAS. 2 disordered regions span residues 36–69 and 182–210; these read QQQQ…TTAS and NEMS…QMIQ.

It belongs to the SepF family. Homodimer. Interacts with FtsZ.

Its subcellular location is the cytoplasm. Functionally, cell division protein that is part of the divisome complex and is recruited early to the Z-ring. Probably stimulates Z-ring formation, perhaps through the cross-linking of FtsZ protofilaments. Its function overlaps with FtsA. The sequence is that of Cell division protein SepF from Trichodesmium erythraeum (strain IMS101).